The sequence spans 696 residues: Elongation factor G (696 aa).

The tr-type G domain occupies 8–290 (ERYRNIGISA…KVIELMPAPT (283 aa)). GTP is bound by residues 17-24 (AHIDAGKT), 88-92 (DTPGH), and 142-145 (NKMD).

The protein belongs to the TRAFAC class translation factor GTPase superfamily. Classic translation factor GTPase family. EF-G/EF-2 subfamily.

Its subcellular location is the cytoplasm. Its function is as follows. Catalyzes the GTP-dependent ribosomal translocation step during translation elongation. During this step, the ribosome changes from the pre-translocational (PRE) to the post-translocational (POST) state as the newly formed A-site-bound peptidyl-tRNA and P-site-bound deacylated tRNA move to the P and E sites, respectively. Catalyzes the coordinated movement of the two tRNA molecules, the mRNA and conformational changes in the ribosome. The protein is Elongation factor G of Thiobacillus denitrificans (strain ATCC 25259 / T1).